The following is a 179-amino-acid chain: Cell division protein ZapC (179 aa).

This sequence belongs to the ZapC family. In terms of assembly, interacts directly with FtsZ.

It localises to the cytoplasm. Contributes to the efficiency of the cell division process by stabilizing the polymeric form of the cell division protein FtsZ. Acts by promoting interactions between FtsZ protofilaments and suppressing the GTPase activity of FtsZ. The sequence is that of Cell division protein ZapC from Photobacterium profundum (strain SS9).